A 130-amino-acid polypeptide reads, in one-letter code: Small ribosomal subunit protein uS9 (130 aa).

The protein belongs to the universal ribosomal protein uS9 family.

The sequence is that of Small ribosomal subunit protein uS9 from Paraburkholderia phymatum (strain DSM 17167 / CIP 108236 / LMG 21445 / STM815) (Burkholderia phymatum).